The sequence spans 130 residues: Small ribosomal subunit protein uS11 (130 aa).

Belongs to the universal ribosomal protein uS11 family. In terms of assembly, part of the 30S ribosomal subunit. Interacts with proteins S7 and S18. Binds to IF-3.

Functionally, located on the platform of the 30S subunit, it bridges several disparate RNA helices of the 16S rRNA. Forms part of the Shine-Dalgarno cleft in the 70S ribosome. This Nautilia profundicola (strain ATCC BAA-1463 / DSM 18972 / AmH) protein is Small ribosomal subunit protein uS11.